Consider the following 302-residue polypeptide: Methionyl-tRNA formyltransferase (302 aa).

108 to 111 (SLLP) serves as a coordination point for (6S)-5,6,7,8-tetrahydrofolate. Positions 276–288 (REGKRPMEPEEFL) are enriched in basic and acidic residues. Residues 276-302 (REGKRPMEPEEFLRGFPLPEGSRAHTA) are disordered.

The protein belongs to the Fmt family.

The catalysed reaction is L-methionyl-tRNA(fMet) + (6R)-10-formyltetrahydrofolate = N-formyl-L-methionyl-tRNA(fMet) + (6S)-5,6,7,8-tetrahydrofolate + H(+). Functionally, attaches a formyl group to the free amino group of methionyl-tRNA(fMet). The formyl group appears to play a dual role in the initiator identity of N-formylmethionyl-tRNA by promoting its recognition by IF2 and preventing the misappropriation of this tRNA by the elongation apparatus. In Cereibacter sphaeroides (strain ATCC 17029 / ATH 2.4.9) (Rhodobacter sphaeroides), this protein is Methionyl-tRNA formyltransferase.